A 409-amino-acid polypeptide reads, in one-letter code: Probable ferredoxin reductase CtmF (409 aa).

FAD contacts are provided by Ala-15, Asp-37, Lys-50, Val-83, Asp-279, and Val-298.

The protein belongs to the FAD-dependent oxidoreductase family. The cofactor is FAD.

The protein operates within terpene metabolism; monoterpene degradation. Involved in the degradation of the cyclic monoterpene limonene. Probably part of an electron transfer system involved in the oxidation of limonene to perillyl alcohol. This chain is Probable ferredoxin reductase CtmF, found in Castellaniella defragrans (strain DSM 12143 / CCUG 39792 / 65Phen) (Alcaligenes defragrans).